The chain runs to 140 residues: MHRKVRPASLMIRKMACSGVEPQILVQYLVLRKDLSQAPFSWPTGALVAQACHAATAALHLHRDHPHTAAYLRELGRMRKVVLEAADETTLKELAETLQQKNIDHTLWLEQPENIATCIALRPYPKEEVSQYLKKFRLFK.

It belongs to the PTH2 family. PTRHD1 subfamily.

It catalyses the reaction an N-acyl-L-alpha-aminoacyl-tRNA + H2O = an N-acyl-L-amino acid + a tRNA + H(+). As a putative peptidyl-tRNA hydrolase, it might be involved in releasing tRNAs from the ribosome during protein synthesis. Some evidence, however, suggests that it lacks peptidyl-tRNA hydrolase activity. The polypeptide is Putative peptidyl-tRNA hydrolase PTRHD1 (Ptrhd1) (Mus musculus (Mouse)).